The chain runs to 395 residues: MATVDRWLLPDGIEEVLPPEAARIETARRRVLDLFQRWGYELVITPHVEFLESLLSGSGQDLDLKTFKVIDPLSGRQMGLRADITPQVARVDAHTLRREGPSRLCYAGSVLHAKPRALATSRSPIQLGAELYGDSSTSSDIEVISLMLEMLELAMVPDVHMDLGHVGIYRGLARAAGLSGEAEQRLFDAMQRKAMDEIAELTATVEPSLAAMLQALARLCGGRETLDAARRVLAEAPAPVTEALEALIRIADQLALRYPDLPLYFDLGELRGYHYHTGVVFAVFVPGVGQSIAQGGRYDDIGADFGRARPATGFSTDLKTLVSLGKAELDSRLSGIWAPYGDDTALWQQISRLRREGERVVQALDGQNGETAATAGCDRQLILQDETWTVAPLAS.

This sequence belongs to the class-II aminoacyl-tRNA synthetase family. HisZ subfamily. Heteromultimer composed of HisG and HisZ subunits.

It localises to the cytoplasm. It functions in the pathway amino-acid biosynthesis; L-histidine biosynthesis; L-histidine from 5-phospho-alpha-D-ribose 1-diphosphate: step 1/9. Required for the first step of histidine biosynthesis. May allow the feedback regulation of ATP phosphoribosyltransferase activity by histidine. This is ATP phosphoribosyltransferase regulatory subunit from Stutzerimonas stutzeri (Pseudomonas stutzeri).